Consider the following 415-residue polypeptide: Methylaspartate ammonia-lyase 2 (415 aa).

Residue glutamine 173 coordinates (2S,3S)-3-methyl-L-aspartate. The Mg(2+) site is built by aspartate 238, glutamate 273, and aspartate 307. Residue glutamine 329 participates in (2S,3S)-3-methyl-L-aspartate binding. The Proton acceptor role is filled by lysine 331. 360-361 contacts (2S,3S)-3-methyl-L-aspartate; the sequence is TC.

This sequence belongs to the methylaspartate ammonia-lyase family. In terms of assembly, homodimer. The cofactor is Mg(2+).

The catalysed reaction is (2S,3S)-3-methyl-L-aspartate = mesaconate + NH4(+). Its pathway is amino-acid degradation; L-glutamate degradation via mesaconate pathway; acetate and pyruvate from L-glutamate: step 2/4. In terms of biological role, involved in the methylaspartate cycle. Catalyzes the formation of the alpha,beta-unsaturated bond by the reversible anti elimination of ammonia from L-threo-beta-methylaspartate (L-threo-(2S,3S)-3-methylaspartate) to give mesaconate. This Carboxydothermus hydrogenoformans (strain ATCC BAA-161 / DSM 6008 / Z-2901) protein is Methylaspartate ammonia-lyase 2.